We begin with the raw amino-acid sequence, 617 residues long: Solute carrier family 2, facilitated glucose transporter member 12 (617 aa).

Residues 1–29 (MVPVENTEGPSLLNQKGTAVETEGSGSRH) are disordered. The Cytoplasmic portion of the chain corresponds to 1 to 44 (MVPVENTEGPSLLNQKGTAVETEGSGSRHPPWARGCGMFTFLSS). Residues 8–17 (EGPSLLNQKG) show a composition bias toward polar residues. The helical transmembrane segment at 45–65 (VTAAVSGLLVGYELGIISGAL) threads the bilayer. Over 66-80 (LQIKTLLALSCHEQE) the chain is Extracellular. A helical membrane pass occupies residues 81–101 (MVVSSLVIGALLASLTGGVLI). The Cytoplasmic segment spans residues 102–115 (DRYGRRTAIILSSC). Residues 116–136 (LLGLGSLVLILSLSYTVLIVG) form a helical membrane-spanning segment. A topological domain (extracellular) is located at residue R137. The helical transmembrane segment at 138–158 (IAIGVSISLSSIATCVYIAEI) threads the bilayer. Topologically, residues 159 to 172 (APQHRRGLLVSLNE) are cytoplasmic. A helical transmembrane segment spans residues 173–193 (LMIVIGILSAYISNYAFANVF). The Extracellular segment spans residues 194-197 (HGWK). The chain crosses the membrane as a helical span at residues 198 to 218 (YMFGLVIPLGVLQAIAMYFLP). The Cytoplasmic segment spans residues 219-278 (PSPRFLVMKGQEGAASKVLGRLRALSDTTEELTVIKSSLKDEYQYSFWDLFRSKDNMRTR). The helical transmembrane segment at 279–299 (IMIGLTLVFFVQITGQPNILF) threads the bilayer. Residues 300–317 (YASTVLKSVGFQSNEAAS) are Extracellular-facing. The chain crosses the membrane as a helical span at residues 318-338 (LASTGVGVVKVISTIPATLLV). The Cytoplasmic segment spans residues 339–345 (DHVGSKT). Residues 346–366 (FLCIGSSVMAASLVTMGIVNL) traverse the membrane as a helical segment. Residues 367–466 (NIHMNFTHIC…PAFLKWLSLA (100 aa)) lie on the Extracellular side of the membrane. N-linked (GlcNAc...) asparagine glycosylation is found at N371, N383, N396, and N401. A helical transmembrane segment spans residues 467-487 (SLLVYVAAFSIGLGPMPWLVL). The Cytoplasmic portion of the chain corresponds to 488 to 498 (SEIFPGGIRGR). The chain crosses the membrane as a helical span at residues 499–519 (AMALTSSMNWGINLLISLTFL). Residues 520–528 (TVTDLIGLP) are Extracellular-facing. Residues 529–549 (WVCFIYTIMSLASLLFVVMFI) form a helical membrane-spanning segment. Residues 550–617 (PETKGCSLEQ…GQSRQLSPET (68 aa)) lie on the Cytoplasmic side of the membrane.

This sequence belongs to the major facilitator superfamily. Sugar transporter (TC 2.A.1.1) family. Glucose transporter subfamily. In terms of tissue distribution, predominantly expressed in skeletal muscle, heart and prostate, with lower levels in brain, placenta and kidney.

It localises to the cell membrane. Its subcellular location is the endomembrane system. The protein localises to the cytoplasm. It is found in the perinuclear region. It catalyses the reaction D-glucose(out) = D-glucose(in). Functionally, insulin-independent facilitative glucose transporter. The sequence is that of Solute carrier family 2, facilitated glucose transporter member 12 from Homo sapiens (Human).